A 58-amino-acid polypeptide reads, in one-letter code: Potassium channel toxin alpha-KTx 9.9 (58 aa).

The N-terminal stretch at 1 to 21 (KKTSRLFTLVLIVLAMNVMMA) is a signal peptide. Positions 22–30 (IISDPVVEA) are excised as a propeptide. 3 cysteine pairs are disulfide-bonded: cysteine 33/cysteine 49, cysteine 36/cysteine 54, and cysteine 40/cysteine 56.

Belongs to the short scorpion toxin superfamily. Potassium channel inhibitor family. Alpha-KTx 09 subfamily. As to expression, expressed by the venom gland.

Its subcellular location is the secreted. Functionally, potassium channel inhibitor. The chain is Potassium channel toxin alpha-KTx 9.9 from Buthus israelis (Israeli scorpion).